The primary structure comprises 633 residues: Extracellular metalloproteinase 3 (633 aa).

A signal peptide spans 1–18; sequence MHGLLLAGLLALPMNVLA. Positions 19–246 are excised as a propeptide; that stretch reads HPAEQQTSSV…VHNVVDYVAS (228 aa). Residue Asn410 is glycosylated (N-linked (GlcNAc...) asparagine). His429 contributes to the Zn(2+) binding site. Glu430 is an active-site residue. Residue His433 participates in Zn(2+) binding. Residue Asn480 is glycosylated (N-linked (GlcNAc...) asparagine).

It belongs to the peptidase M36 family. Requires Zn(2+) as cofactor.

The protein resides in the secreted. In terms of biological role, secreted metalloproteinase probably acting as a virulence factor. In Arthroderma otae (Microsporum canis), this protein is Extracellular metalloproteinase 3 (MEP3).